Reading from the N-terminus, the 211-residue chain is Potassium-transporting ATPase KdpC subunit (211 aa).

Residues 13–35 (VVTMVLTGLLYPLAVTGLAQLLF) form a helical membrane-spanning segment.

It belongs to the KdpC family. In terms of assembly, the system is composed of three essential subunits: KdpA, KdpB and KdpC.

It is found in the cell inner membrane. Its function is as follows. Part of the high-affinity ATP-driven potassium transport (or Kdp) system, which catalyzes the hydrolysis of ATP coupled with the electrogenic transport of potassium into the cytoplasm. This subunit acts as a catalytic chaperone that increases the ATP-binding affinity of the ATP-hydrolyzing subunit KdpB by the formation of a transient KdpB/KdpC/ATP ternary complex. The sequence is that of Potassium-transporting ATPase KdpC subunit from Myxococcus xanthus (strain DK1622).